A 198-amino-acid polypeptide reads, in one-letter code: Recombination protein RecR (198 aa).

The C4-type zinc finger occupies 58–73; that stretch reads CLNCGNVGTSDICDIC. One can recognise a Toprim domain in the interval 81–175; that stretch reads GELCVVEDVA…RLTSLAQGVP (95 aa).

It belongs to the RecR family.

Its function is as follows. May play a role in DNA repair. It seems to be involved in an RecBC-independent recombinational process of DNA repair. It may act with RecF and RecO. This Ruegeria pomeroyi (strain ATCC 700808 / DSM 15171 / DSS-3) (Silicibacter pomeroyi) protein is Recombination protein RecR.